The chain runs to 117 residues: NADH-ubiquinone oxidoreductase chain 3 (117 aa).

Transmembrane regions (helical) follow at residues 4-24 (IIFI…LASI), 60-80 (ITII…MIII), and 86-106 (IMIW…GLYH).

Belongs to the complex I subunit 3 family.

The protein localises to the mitochondrion membrane. It carries out the reaction a ubiquinone + NADH + 5 H(+)(in) = a ubiquinol + NAD(+) + 4 H(+)(out). Functionally, core subunit of the mitochondrial membrane respiratory chain NADH dehydrogenase (Complex I) that is believed to belong to the minimal assembly required for catalysis. Complex I functions in the transfer of electrons from NADH to the respiratory chain. The immediate electron acceptor for the enzyme is believed to be ubiquinone. This is NADH-ubiquinone oxidoreductase chain 3 (mt:ND3) from Drosophila melanogaster (Fruit fly).